The sequence spans 570 residues: Proline--tRNA ligase (570 aa).

The protein belongs to the class-II aminoacyl-tRNA synthetase family. ProS type 1 subfamily. In terms of assembly, homodimer.

The protein resides in the cytoplasm. It carries out the reaction tRNA(Pro) + L-proline + ATP = L-prolyl-tRNA(Pro) + AMP + diphosphate. Catalyzes the attachment of proline to tRNA(Pro) in a two-step reaction: proline is first activated by ATP to form Pro-AMP and then transferred to the acceptor end of tRNA(Pro). As ProRS can inadvertently accommodate and process non-cognate amino acids such as alanine and cysteine, to avoid such errors it has two additional distinct editing activities against alanine. One activity is designated as 'pretransfer' editing and involves the tRNA(Pro)-independent hydrolysis of activated Ala-AMP. The other activity is designated 'posttransfer' editing and involves deacylation of mischarged Ala-tRNA(Pro). The misacylated Cys-tRNA(Pro) is not edited by ProRS. This is Proline--tRNA ligase from Neisseria meningitidis serogroup A / serotype 4A (strain DSM 15465 / Z2491).